A 643-amino-acid polypeptide reads, in one-letter code: Beta-1,3-galactosyltransferase GALT1 (643 aa).

At 1–6 the chain is on the cytoplasmic side; sequence MKRFYG. A helical; Signal-anchor for type II membrane protein transmembrane segment spans residues 7 to 23; that stretch reads GLLVVSMCMFLTVYRYV. Topologically, residues 24 to 643 are lumenal; that stretch reads DLNTPVEKPY…TKRSLCCREW (620 aa). N-linked (GlcNAc...) asparagine glycosylation is found at Asn-45, Asn-87, Asn-144, Asn-162, Asn-277, Asn-287, and Asn-508. One can recognise a Galectin domain in the interval 171-364; it reads LKLQIPCGLT…DFRLISILAS (194 aa).

This sequence belongs to the glycosyltransferase 31 family. As to quaternary structure, interacts with GMII. The cofactor is Mn(2+). In terms of tissue distribution, expressed in stems and siliques.

The protein resides in the golgi apparatus membrane. It participates in protein modification; protein glycosylation. In terms of biological role, beta-1,3-galactosyltransferase that transfers galactose from UDP-galactose to substrates with a terminal beta-N-acetylglucosamine (beta-GlcNAc) residue. Involved in the biosynthesis of N-glycans containing Lewis a structures (with the combination of FUT13). This is Beta-1,3-galactosyltransferase GALT1 from Arabidopsis thaliana (Mouse-ear cress).